A 130-amino-acid chain; its full sequence is Small ribosomal subunit protein uS11c (130 aa).

It belongs to the universal ribosomal protein uS11 family. As to quaternary structure, part of the 30S ribosomal subunit.

It localises to the plastid. The protein localises to the chloroplast. This is Small ribosomal subunit protein uS11c from Pinus thunbergii (Japanese black pine).